The sequence spans 388 residues: Chorismate synthase (388 aa).

R39 and R45 together coordinate NADP(+). FMN-binding positions include 130 to 132 (RSS), 251 to 252 (NA), G296, 311 to 315 (KPIPT), and R337.

The protein belongs to the chorismate synthase family. As to quaternary structure, homotetramer. Requires FMNH2 as cofactor.

The enzyme catalyses 5-O-(1-carboxyvinyl)-3-phosphoshikimate = chorismate + phosphate. It participates in metabolic intermediate biosynthesis; chorismate biosynthesis; chorismate from D-erythrose 4-phosphate and phosphoenolpyruvate: step 7/7. Catalyzes the anti-1,4-elimination of the C-3 phosphate and the C-6 proR hydrogen from 5-enolpyruvylshikimate-3-phosphate (EPSP) to yield chorismate, which is the branch point compound that serves as the starting substrate for the three terminal pathways of aromatic amino acid biosynthesis. This reaction introduces a second double bond into the aromatic ring system. This Streptococcus pneumoniae (strain ATCC 700669 / Spain 23F-1) protein is Chorismate synthase.